The following is a 572-amino-acid chain: uncharacterized protein (572 aa).

A disordered region spans residues P553 to S572. Over residues T561–S572 the composition is skewed to basic residues.

This is an uncharacterized protein from Homo sapiens (Human).